Reading from the N-terminus, the 134-residue chain is Interleukin-4 (134 aa).

A signal peptide spans 1–23 (MGLTYQLLPALVCLLACTSFIQG). Disulfide bonds link C24-C133 and C48-C88. A glycan (N-linked (GlcNAc...) asparagine) is linked at N38. N101 is a glycosylation site (N-linked (GlcNAc...) asparagine).

It belongs to the IL-4/IL-13 family.

It localises to the secreted. In terms of biological role, participates in at least several B-cell activation processes as well as of other cell types. It is a costimulator of DNA-synthesis. It induces the expression of class II MHC molecules on resting B-cells. It enhances both secretion and cell surface expression of IgE and IgG1. It also regulates the expression of the low affinity Fc receptor for IgE (CD23) on both lymphocytes and monocytes. Positively regulates IL31RA expression in macrophages. Stimulates autophagy in dendritic cells by interfering with mTORC1 signaling and through the induction of RUFY4. The protein is Interleukin-4 (IL4) of Equus caballus (Horse).